Here is a 461-residue protein sequence, read N- to C-terminus: Homocitrate synthase (461 aa).

Residues 4–259 (VGILDSTLRE…IEVVKLDKLQ (256 aa)) form the Pyruvate carboxyltransferase domain. Residue R12 coordinates 2-oxoglutarate. E13 is a Mg(2+) binding site. H76, R136, and T170 together coordinate 2-oxoglutarate. The Mg(2+) site is built by H198 and H200. H292 serves as the catalytic Proton acceptor.

The protein belongs to the alpha-IPM synthase/homocitrate synthase family. Homocitrate synthase LYS20/LYS21 subfamily. Mg(2+) serves as cofactor. It depends on Mn(2+) as a cofactor.

It catalyses the reaction acetyl-CoA + 2-oxoglutarate + H2O = (2R)-homocitrate + CoA + H(+). It participates in amino-acid biosynthesis; L-lysine biosynthesis via AAA pathway; L-alpha-aminoadipate from 2-oxoglutarate: step 1/5. Functionally, catalyzes the aldol-type condensation of 2-oxoglutarate with acetyl-CoA to yield homocitrate. Carries out the first step of the alpha-aminoadipate (AAA) lysine biosynthesis pathway. This Saccharolobus islandicus (strain L.S.2.15 / Lassen #1) (Sulfolobus islandicus) protein is Homocitrate synthase.